Reading from the N-terminus, the 299-residue chain is Taste receptor type 2 member 5 (299 aa).

Met1 is a topological domain (extracellular). The helical transmembrane segment at 2–22 threads the bilayer; sequence LSAGLGLLMLVAVIEFLIGLI. At 23-45 the chain is on the cytoplasmic side; the sequence is GNGILVVWSLREWIRKFSWSSYN. Residues 46 to 66 traverse the membrane as a helical segment; it reads LIILGLAGCRFLLQWLIILDL. At 67–82 the chain is on the extracellular side; it reads SLFPLFQSSSWLRYLN. Residues 83-103 form a helical membrane-spanning segment; it reads VFWVLVSQASLWFATFLSVFY. Residues 104 to 127 lie on the Cytoplasmic side of the membrane; the sequence is CKKITTFDRPAYLWLKQRAYNLSL. The chain crosses the membrane as a helical span at residues 128–148; that stretch reads WCLLGYFIISLLLTVQVGLTV. Over 149–175 the chain is Extracellular; it reads HHPPQGNSSIRYPFEHWQYLYVFQLNS. Asn155 carries N-linked (GlcNAc...) asparagine glycosylation. Residues 176-196 form a helical membrane-spanning segment; sequence GSYLPLMVFLVSSGMLIISLY. At 197–223 the chain is on the cytoplasmic side; sequence THHKKMKVHSAGRRDARAKAHITALKS. A helical transmembrane segment spans residues 224–244; it reads LGCFLLLHLVYIVASPFSITS. The Extracellular segment spans residues 245 to 253; the sequence is KTYPPDLTS. The chain crosses the membrane as a helical span at residues 254-274; sequence VFIWETLMAAYPSLHSLMLIM. Topologically, residues 275 to 299 are cytoplasmic; the sequence is GIPRVKQTCQKILWKTVCARRCWGP.

It belongs to the G-protein coupled receptor T2R family.

It localises to the membrane. Its function is as follows. Receptor that may play a role in the perception of bitterness and is gustducin-linked. May play a role in sensing the chemical composition of the gastrointestinal content. The activity of this receptor may stimulate alpha gustducin, mediate PLC-beta-2 activation and lead to the gating of TRPM5. The chain is Taste receptor type 2 member 5 (TAS2R5) from Papio hamadryas (Hamadryas baboon).